The chain runs to 1090 residues: Protein unc-13 homolog D (1090 aa).

The 148-residue stretch at 92–239 folds into the C2 1 domain; sequence EPEEHQQTLQ…FKEARKDKGQ (148 aa). Positions 127 and 133 each coordinate Ca(2+). Phosphoserine is present on Ser150. Residues Asp206 and Asp208 each contribute to the Ca(2+) site. The interaction with RAB27A stretch occupies residues 240-543; the sequence is DDFLGNVVLR…AKRVQDHTTV (304 aa). In terms of domain architecture, MHD1 spans 557 to 677; it reads FQLYISLKEL…RLALVYCSLI (121 aa). Residues 788–895 form the MHD2 domain; that stretch reads EDAILPLMKF…ASSRELIRKY (108 aa). One can recognise a C2 2 domain in the interval 910–1035; the sequence is ELGAVTVKAS…PGLSGSEEPG (126 aa). The Ca(2+) site is built by Leu940, Asp941, Asp947, Asp1005, Asp1007, and Asp1013. The tract at residues 1026–1048 is disordered; sequence PGLSGSEEPGEVPQTRLPLTYPA.

Belongs to the unc-13 family. Interacts with DOC2A. Interacts with RAB27A. Interacts with RHOG; the interaction increases RhoG affinity to the membrane lipids, targets UNC13D to membrane lipids and facilitates cytotoxic granule (CG) docking to the plasma membrane. Ca(2+) serves as cofactor. In terms of tissue distribution, expressed at high levels in spleen, thymus and leukocytes. Also expressed in lung and placenta, and at very low levels in brain, heart, skeletal muscle and kidney. Expressed in cytotoxic T-lymphocytes (CTL) and mast cells.

The protein resides in the cytoplasm. The protein localises to the membrane. It is found in the late endosome. It localises to the recycling endosome. Its subcellular location is the lysosome. In terms of biological role, plays a role in cytotoxic granule exocytosis in lymphocytes. Required for both granule maturation and granule docking and priming at the immunologic synapse. Regulates assembly of recycling and late endosomal structures, leading to the formation of an endosomal exocytic compartment that fuses with perforin-containing granules at the immunologic synapse and licences them for exocytosis. Regulates Ca(2+)-dependent secretory lysosome exocytosis in mast cells. The protein is Protein unc-13 homolog D (UNC13D) of Homo sapiens (Human).